We begin with the raw amino-acid sequence, 436 residues long: RNA-binding motif, single-stranded-interacting protein 3 (436 aa).

Residues 28–56 (APAPHPMAPPSPSTNSSSNNSSNNSSGEQ) form a disordered region. The span at 30–39 (APHPMAPPSP) shows a compositional bias: pro residues. The span at 40–53 (STNSSSNNSSNNSS) shows a compositional bias: low complexity. RRM domains follow at residues 60-133 (TNLY…MAKQ) and 139-224 (TNLY…FADG). Over residues 398-421 (TSPQTVAPSSQDTSGQQQQIAVDT) the composition is skewed to polar residues. The tract at residues 398 to 436 (TSPQTVAPSSQDTSGQQQQIAVDTSNEHAPAYSYQQSKP) is disordered.

It is found in the cytoplasm. In terms of biological role, binds poly(A) and poly(U) oligoribonucleotides. The chain is RNA-binding motif, single-stranded-interacting protein 3 (RBMS3) from Pongo abelii (Sumatran orangutan).